A 316-amino-acid chain; its full sequence is CD-NTase-associated protein 12 (316 aa).

Residues 4-121 (RIFIGSSSEG…MLGITQTRYE (118 aa)) enclose the TIR domain. The STING domain stretch occupies residues 161-316 (STVIAISYFE…ECVEIIEPQP (156 aa)). 3',3'-c-di-GMP is bound by residues Phe172, Pro237, and Asp253.

This sequence in the C-terminal section; belongs to the bacterial STING family. In terms of assembly, forms homodimers; in the presence of c-di-GMP forms filaments with an ordered array of parallel-stacked subunits.

It carries out the reaction NAD(+) + H2O = ADP-D-ribose + nicotinamide + H(+). NAD(+) hydrolase activity is strongly stimulated by c-di-GMP, weakly by 3'3'-cGAMP, very weakly by c-di-AMP but not at all by 2'3'-cGAMP. Self-association of TIR domains is required for NADase activity. Its function is as follows. Effector protein of a CBASS antiviral system with NAD(+) hydrolase activity. CBASS (cyclic oligonucleotide-based antiphage signaling system) provides immunity against bacteriophage. The CD-NTase protein synthesizes cyclic nucleotides in response to infection; these serve as specific second messenger signals. The signals activate a diverse range of effectors, leading to bacterial cell death and thus abortive phage infection. A type I-D(GG) CBASS system. Functionally, binds c-di-GMP (synthesized by the cognate CdnE encoded upstream in the same operon) but not c-di-AMP, 2'-3'-cGAMP, 3'-3'-cGAMP or cUMP-AMP (tested without the N-terminal TIR domain). Upon activation by c-di-GMP forms filaments which hydrolyze NAD(+); filament formation is required for enzyme activation. The polypeptide is CD-NTase-associated protein 12 (Lachnospiraceae bacterium (strain RUG226)).